The primary structure comprises 403 residues: Tyrosine--tRNA ligase (403 aa).

Residues 45-54 carry the 'HIGH' region motif; the sequence is PTAPDLHLGH. A 'KMSKS' region motif is present at residues 229–233; sequence KMSKS. K232 provides a ligand contact to ATP. The S4 RNA-binding domain maps to 341–402; it reads VALCRLLAEA…GKRRFARITF (62 aa).

Belongs to the class-I aminoacyl-tRNA synthetase family. TyrS type 2 subfamily. Homodimer.

It localises to the cytoplasm. It carries out the reaction tRNA(Tyr) + L-tyrosine + ATP = L-tyrosyl-tRNA(Tyr) + AMP + diphosphate + H(+). In terms of biological role, catalyzes the attachment of tyrosine to tRNA(Tyr) in a two-step reaction: tyrosine is first activated by ATP to form Tyr-AMP and then transferred to the acceptor end of tRNA(Tyr). The chain is Tyrosine--tRNA ligase from Geobacter sulfurreducens (strain ATCC 51573 / DSM 12127 / PCA).